We begin with the raw amino-acid sequence, 468 residues long: Citrate synthase, mitochondrial (468 aa).

Residues 1–30 (MSFLSISRLAPRLLSSKNAACVVVAARNAS) constitute a mitochondrion transit peptide. Catalysis depends on residues His303 and His349. Residue Arg358 participates in oxaloacetate binding. The active site involves Asp404. Residues Arg430 and Arg450 each coordinate oxaloacetate.

Belongs to the citrate synthase family. As to quaternary structure, homodimer.

The protein localises to the mitochondrion matrix. The enzyme catalyses oxaloacetate + acetyl-CoA + H2O = citrate + CoA + H(+). Its pathway is carbohydrate metabolism; tricarboxylic acid cycle; isocitrate from oxaloacetate: step 1/2. Functionally, key enzyme of the Krebs tricarboxylic acid cycle which catalyzes the synthesis of citrate from acetyl coenzyme A and oxaloacetate. The protein is Citrate synthase, mitochondrial (cs) of Danio rerio (Zebrafish).